The following is a 429-amino-acid chain: Serine--tRNA ligase (429 aa).

229–231 is an L-serine binding site; the sequence is TAE. An ATP-binding site is contributed by 260 to 262; it reads RSE. Glu283 contributes to the L-serine binding site. Residue 347–350 participates in ATP binding; the sequence is EISS. Position 383 (Ser383) interacts with L-serine.

This sequence belongs to the class-II aminoacyl-tRNA synthetase family. Type-1 seryl-tRNA synthetase subfamily. In terms of assembly, homodimer. The tRNA molecule binds across the dimer.

Its subcellular location is the cytoplasm. It catalyses the reaction tRNA(Ser) + L-serine + ATP = L-seryl-tRNA(Ser) + AMP + diphosphate + H(+). The enzyme catalyses tRNA(Sec) + L-serine + ATP = L-seryl-tRNA(Sec) + AMP + diphosphate + H(+). It participates in aminoacyl-tRNA biosynthesis; selenocysteinyl-tRNA(Sec) biosynthesis; L-seryl-tRNA(Sec) from L-serine and tRNA(Sec): step 1/1. In terms of biological role, catalyzes the attachment of serine to tRNA(Ser). Is also able to aminoacylate tRNA(Sec) with serine, to form the misacylated tRNA L-seryl-tRNA(Sec), which will be further converted into selenocysteinyl-tRNA(Sec). This is Serine--tRNA ligase from Orientia tsutsugamushi (strain Boryong) (Rickettsia tsutsugamushi).